Reading from the N-terminus, the 1379-residue chain is DNA-directed RNA polymerase subunit beta'' (1379 aa).

4 residues coordinate Zn(2+): Cys-220, Cys-291, Cys-298, and Cys-301.

The protein belongs to the RNA polymerase beta' chain family. RpoC2 subfamily. As to quaternary structure, in plastids the minimal PEP RNA polymerase catalytic core is composed of four subunits: alpha, beta, beta', and beta''. When a (nuclear-encoded) sigma factor is associated with the core the holoenzyme is formed, which can initiate transcription. Zn(2+) serves as cofactor.

The protein localises to the plastid. It carries out the reaction RNA(n) + a ribonucleoside 5'-triphosphate = RNA(n+1) + diphosphate. In terms of biological role, DNA-dependent RNA polymerase catalyzes the transcription of DNA into RNA using the four ribonucleoside triphosphates as substrates. The sequence is that of DNA-directed RNA polymerase subunit beta'' from Cuscuta reflexa (Southern Asian dodder).